The following is a 122-amino-acid chain: Large ribosomal subunit protein uL24 (122 aa).

It belongs to the universal ribosomal protein uL24 family. In terms of assembly, part of the 50S ribosomal subunit.

Functionally, one of two assembly initiator proteins, it binds directly to the 5'-end of the 23S rRNA, where it nucleates assembly of the 50S subunit. In terms of biological role, located at the polypeptide exit tunnel on the outside of the subunit. This is Large ribosomal subunit protein uL24 from Methanosarcina mazei (strain ATCC BAA-159 / DSM 3647 / Goe1 / Go1 / JCM 11833 / OCM 88) (Methanosarcina frisia).